The following is a 373-amino-acid chain: tRNA N6-adenosine threonylcarbamoyltransferase (373 aa).

Residues histidine 133, histidine 137, and tyrosine 154 each coordinate a divalent metal cation. Substrate is bound by residues 154–158 (YVSGG), aspartate 186, glycine 201, glutamate 205, and asparagine 302. Aspartate 331 is an a divalent metal cation binding site.

It belongs to the KAE1 / TsaD family. Component of the EKC/KEOPS complex composed of at least BUD32, CGI121, GON7, KAE1 and PCC1; the whole complex dimerizes. A divalent metal cation serves as cofactor.

The protein resides in the cytoplasm. The protein localises to the nucleus. The enzyme catalyses L-threonylcarbamoyladenylate + adenosine(37) in tRNA = N(6)-L-threonylcarbamoyladenosine(37) in tRNA + AMP + H(+). Its function is as follows. Component of the EKC/KEOPS complex that is required for the formation of a threonylcarbamoyl group on adenosine at position 37 (t(6)A37) in tRNAs that read codons beginning with adenine. The complex is probably involved in the transfer of the threonylcarbamoyl moiety of threonylcarbamoyl-AMP (TC-AMP) to the N6 group of A37. KAE1 likely plays a direct catalytic role in this reaction, but requires other protein(s) of the complex to fulfill this activity. The EKC/KEOPS complex also promotes both telomere uncapping and telomere elongation. The complex is required for efficient recruitment of transcriptional coactivators. The sequence is that of tRNA N6-adenosine threonylcarbamoyltransferase from Debaryomyces hansenii (strain ATCC 36239 / CBS 767 / BCRC 21394 / JCM 1990 / NBRC 0083 / IGC 2968) (Yeast).